The chain runs to 318 residues: NADH-ubiquinone oxidoreductase chain 1 (318 aa).

8 helical membrane passes run 3–23, 69–89, 100–120, 135–155, 171–191, 223–243, 253–273, and 293–313; these read LINVLSLIIPILLAVAFLTLL, LMFTLAPTLALTLALSLWIPI, LGVLFILAMSSLAVYSILWSG, AVAQTISYEVTLAIILLSIMM, HMWLIFPLWPLAMMWFISTLA, FFLAEYANIIMMNALTAILFF, ELHTLNLITKTLILTMMFLWV, and FLPLTLALCMLHVSAPATFAG.

Belongs to the complex I subunit 1 family.

The protein localises to the mitochondrion inner membrane. The catalysed reaction is a ubiquinone + NADH + 5 H(+)(in) = a ubiquinol + NAD(+) + 4 H(+)(out). Core subunit of the mitochondrial membrane respiratory chain NADH dehydrogenase (Complex I) that is believed to belong to the minimal assembly required for catalysis. Complex I functions in the transfer of electrons from NADH to the respiratory chain. The immediate electron acceptor for the enzyme is believed to be ubiquinone. This is NADH-ubiquinone oxidoreductase chain 1 (MT-ND1) from Dasypus novemcinctus (Nine-banded armadillo).